The sequence spans 276 residues: MPELPEVETVRRGLEKLVLNKKIKDIRVLYSKTIVNEESEFIEKLTNKTIKKIDRRGKYLLFRFSSDLTMISHLRMEGKYFVEPSTKEVEKHTHVVFDFTDGTSLRYNDVRKFGRMQLVKTGMEIQTAGLAKLGPEPKEKTFIVEDFSKNLKRRKKAIKNALLDQTIVAGLGNIYADEVLWMSKIHPETPANKLTEEEVKVLRDNIIKELALATEAGGTTIRSYTDAFRHSGGFQFSLHAYQRTGDPCERCGTPIQRIVVGQRGTHFCPKCQVVKS.

Pro-2 serves as the catalytic Schiff-base intermediate with DNA. The active-site Proton donor is the Glu-3. The active-site Proton donor; for beta-elimination activity is Lys-58. DNA is bound by residues His-92, Arg-111, and Arg-154. Residues 239–273 form an FPG-type zinc finger; that stretch reads HAYQRTGDPCERCGTPIQRIVVGQRGTHFCPKCQV. The active-site Proton donor; for delta-elimination activity is Arg-263.

Belongs to the FPG family. In terms of assembly, monomer. Requires Zn(2+) as cofactor.

It catalyses the reaction Hydrolysis of DNA containing ring-opened 7-methylguanine residues, releasing 2,6-diamino-4-hydroxy-5-(N-methyl)formamidopyrimidine.. The enzyme catalyses 2'-deoxyribonucleotide-(2'-deoxyribose 5'-phosphate)-2'-deoxyribonucleotide-DNA = a 3'-end 2'-deoxyribonucleotide-(2,3-dehydro-2,3-deoxyribose 5'-phosphate)-DNA + a 5'-end 5'-phospho-2'-deoxyribonucleoside-DNA + H(+). In terms of biological role, involved in base excision repair of DNA damaged by oxidation or by mutagenic agents. Acts as a DNA glycosylase that recognizes and removes damaged bases. Has a preference for oxidized purines, such as 7,8-dihydro-8-oxoguanine (8-oxoG). Has AP (apurinic/apyrimidinic) lyase activity and introduces nicks in the DNA strand. Cleaves the DNA backbone by beta-delta elimination to generate a single-strand break at the site of the removed base with both 3'- and 5'-phosphates. This chain is Formamidopyrimidine-DNA glycosylase, found in Ligilactobacillus salivarius (strain UCC118) (Lactobacillus salivarius).